A 353-amino-acid polypeptide reads, in one-letter code: Photosystem II D2 protein (353 aa).

Position 2 is an N-acetylthreonine (T2). Residue T2 is modified to Phosphothreonine. A helical membrane pass occupies residues C41 to T61. H118 is a chlorophyll a binding site. The helical transmembrane segment at G125–P141 threads the bilayer. The pheophytin a site is built by Q130 and N143. Residues V153–S166 form a helical membrane-spanning segment. A chlorophyll a-binding site is contributed by H198. The chain crosses the membrane as a helical span at residues A208–D228. The a plastoquinone site is built by H215 and F262. H215 provides a ligand contact to Fe cation. H269 is a binding site for Fe cation. Residues G279 to R295 form a helical membrane-spanning segment.

Belongs to the reaction center PufL/M/PsbA/D family. PSII is composed of 1 copy each of membrane proteins PsbA, PsbB, PsbC, PsbD, PsbE, PsbF, PsbH, PsbI, PsbJ, PsbK, PsbL, PsbM, PsbT, PsbX, PsbY, PsbZ, Psb30/Ycf12, at least 3 peripheral proteins of the oxygen-evolving complex and a large number of cofactors. It forms dimeric complexes. The cofactor is The D1/D2 heterodimer binds P680, chlorophylls that are the primary electron donor of PSII, and subsequent electron acceptors. It shares a non-heme iron and each subunit binds pheophytin, quinone, additional chlorophylls, carotenoids and lipids. There is also a Cl(-1) ion associated with D1 and D2, which is required for oxygen evolution. The PSII complex binds additional chlorophylls, carotenoids and specific lipids..

Its subcellular location is the plastid. It is found in the chloroplast thylakoid membrane. The catalysed reaction is 2 a plastoquinone + 4 hnu + 2 H2O = 2 a plastoquinol + O2. Its function is as follows. Photosystem II (PSII) is a light-driven water:plastoquinone oxidoreductase that uses light energy to abstract electrons from H(2)O, generating O(2) and a proton gradient subsequently used for ATP formation. It consists of a core antenna complex that captures photons, and an electron transfer chain that converts photonic excitation into a charge separation. The D1/D2 (PsbA/PsbD) reaction center heterodimer binds P680, the primary electron donor of PSII as well as several subsequent electron acceptors. D2 is needed for assembly of a stable PSII complex. The polypeptide is Photosystem II D2 protein (Lemna minor (Common duckweed)).